A 73-amino-acid polypeptide reads, in one-letter code: Putative membrane protein insertion efficiency factor (73 aa).

It belongs to the UPF0161 family.

It localises to the cell inner membrane. Functionally, could be involved in insertion of integral membrane proteins into the membrane. In Jannaschia sp. (strain CCS1), this protein is Putative membrane protein insertion efficiency factor.